The chain runs to 316 residues: CD-NTase-associated protein 12 (316 aa).

In terms of domain architecture, TIR spans Arg4–Glu121. Residues Ser161–Pro316 are STING domain. Phe172, Pro237, and Asp253 together coordinate 3',3'-c-di-GMP.

This sequence in the C-terminal section; belongs to the bacterial STING family. As to quaternary structure, forms homodimers; in the presence of c-di-GMP forms filaments with an ordered array of parallel-stacked subunits.

The enzyme catalyses NAD(+) + H2O = ADP-D-ribose + nicotinamide + H(+). Its activity is regulated as follows. NAD(+) hydrolase activity is strongly stimulated by c-di-GMP, weakly by 3'3'-cGAMP, very weakly by c-di-AMP but not at all by 2'3'-cGAMP. Self-association of TIR domains is required for NADase activity. In terms of biological role, effector protein of a CBASS antiviral system with NAD(+) hydrolase activity. CBASS (cyclic oligonucleotide-based antiphage signaling system) provides immunity against bacteriophage. The CD-NTase protein synthesizes cyclic nucleotides in response to infection; these serve as specific second messenger signals. The signals activate a diverse range of effectors, leading to bacterial cell death and thus abortive phage infection. A type I-D(GG) CBASS system. Binds c-di-GMP (synthesized by the cognate CdnE encoded upstream in the same operon) but not c-di-AMP, 2'-3'-cGAMP, 3'-3'-cGAMP or cUMP-AMP (tested without the N-terminal TIR domain). Upon activation by c-di-GMP forms filaments which hydrolyze NAD(+); filament formation is required for enzyme activation. The chain is CD-NTase-associated protein 12 from Lachnospiraceae bacterium (strain RUG226).